The following is a 1159-amino-acid chain: Reverse gyrase 2 (1159 aa).

The RG N-terminal-type zinc finger occupies 1 to 40 (MALELIERGCPNCGGVISSDRLEKGLPCSKCLPKPTEEKV). Zn(2+)-binding residues include C10, C13, C28, and C31. ATP is bound by residues Q82 and 99 to 106 (APTGVGKT). The 190-residue stretch at 86 to 275 (AKRVFMNQSF…LFRNLLGFDV (190 aa)) folds into the Helicase ATP-binding domain. The short motif at 196–199 (DDID) is the DEAD box element. The interval 583–1159 (DLFKTTLVIV…LLKEEKAFKK (577 aa)) is topoisomerase I. The Toprim domain maps to 587-743 (TTLVIVESPN…NIKRAEFHEV (157 aa)). Mg(2+)-binding residues include E593 and D712. The Topo IA-type catalytic domain maps to 759–1152 (DLNLVKAQLV…EVHRIKVLLK (394 aa)). Y902 serves as the catalytic O-(5'-phospho-DNA)-tyrosine intermediate.

The protein in the N-terminal section; belongs to the DEAD box helicase family. DDVD subfamily. This sequence in the C-terminal section; belongs to the type IA topoisomerase family. Monomer. Requires Zn(2+) as cofactor. The cofactor is Mg(2+).

The protein resides in the cytoplasm. The catalysed reaction is ATP + H2O = ADP + phosphate + H(+). Its function is as follows. Modifies the topological state of DNA by introducing positive supercoils in an ATP-dependent process, increasing the linking number in steps of +1. Binds to single-stranded DNA, transiently cleaves and then rejoins the ends, introducing a positive supercoil in the process. The scissile phosphodiester is attacked by the catalytic tyrosine of the enzyme, resulting in the formation of a DNA-(5'-phosphotyrosyl)-enzyme intermediate. Probably involved in rewinding DNA strands in regions of the chromosome that have opened up to allow replication, transcription, DNA repair and/or for DNA protection. The protein is Reverse gyrase 2 of Aquifex aeolicus (strain VF5).